The sequence spans 600 residues: Long-chain-fatty-acid--CoA ligase FadD15 (600 aa).

Belongs to the ATP-dependent AMP-binding enzyme family.

The catalysed reaction is a long-chain fatty acid + ATP + CoA = a long-chain fatty acyl-CoA + AMP + diphosphate. The protein operates within lipid metabolism; fatty acid biosynthesis. Functionally, catalyzes the activation of long-chain fatty acids as acyl-coenzyme A (acyl-CoA), which are then transferred to the multifunctional polyketide synthase (PKS) type III for further chain extension. This is Long-chain-fatty-acid--CoA ligase FadD15 (fadD15) from Mycobacterium bovis (strain ATCC BAA-935 / AF2122/97).